The primary structure comprises 928 residues: Envelope glycoprotein B (928 aa).

Residues 1–12 are compositionally biased toward low complexity; it reads MAARGGAERAAG. Disordered regions lie at residues 1–25 and 67–105; these read MAARGGAERAAGAGDGRRGQRRHLR and GRPATTPPAPPPEEAASPAPPASPSPPGPDGDDAASPDN. The signal sequence occupies residues 1–62; that stretch reads MAARGGAERA…LWATWALLLA (62 aa). The Virion surface segment spans residues 63-803; the sequence is APAAGRPATT…SGIASFIANP (741 aa). Positions 71 to 95 are enriched in pro residues; it reads TTPPAPPPEEAASPAPPASPSPPGP. 2 N-linked (GlcNAc...) asparagine; by host glycosylation sites follow: Asn-105 and Asn-153. 5 cysteine pairs are disulfide-bonded: Cys-128/Cys-606, Cys-145/Cys-562, Cys-219/Cys-283, Cys-376/Cys-424, and Cys-627/Cys-662. 2 involved in fusion and/or binding to host membrane regions span residues 185–191 and 270–277; these read TWAGSTY and GSAGLYRT. Residues Asn-442 and Asn-484 are each glycosylated (N-linked (GlcNAc...) asparagine; by host). The interval 495-525 is disordered; sequence APKPGPRRARRPRRLRPAPGRGQRARRRRHA. Basic residues predominate over residues 499–510; sequence GPRRARRPRRLR. Residues Asn-637 and Asn-703 are each glycosylated (N-linked (GlcNAc...) asparagine; by host). 2 hydrophobic membrane proximal region regions span residues 748 to 801 and 781 to 801; these read IDRV…SFIA and VVLGAAGAALSTVSGIASFIA. Residues 804–824 form a helical membrane-spanning segment; that stretch reads FGALATGLLVLAGLVAAFLAY. The Intravirion portion of the chain corresponds to 825–928; sequence RYISRLRSNP…QLPMADVGGA (104 aa). Residues 876 to 879 carry the Golgi targeting motif; that stretch reads YMSL. The Internalization motif signature appears at 917 to 920; the sequence is YQQL.

It belongs to the herpesviridae glycoprotein B family. Homotrimer; disulfide-linked. Binds to heparan sulfate proteoglycans. Interacts with gH/gL heterodimer. Post-translationally, a proteolytic cleavage by host furin generates two subunits that remain linked by disulfide bonds.

The protein resides in the virion membrane. Its subcellular location is the host cell membrane. It is found in the host endosome membrane. It localises to the host Golgi apparatus membrane. Envelope glycoprotein that forms spikes at the surface of virion envelope. Essential for the initial attachment to heparan sulfate moieties of the host cell surface proteoglycans. Involved in fusion of viral and cellular membranes leading to virus entry into the host cell. Following initial binding to its host receptors, membrane fusion is mediated by the fusion machinery composed at least of gB and the heterodimer gH/gL. May be involved in the fusion between the virion envelope and the outer nuclear membrane during virion egress. The sequence is that of Envelope glycoprotein B from Bovine herpesvirus 1.1 (strain P8-2) (BoHV-1).